A 155-amino-acid chain; its full sequence is Large ribosomal subunit protein eL24B (155 aa).

Serine 7 is modified (phosphoserine). The interval 66 to 155 is disordered; the sequence is EVAKKRSRKT…AFQKVAATSR (90 aa). Basic and acidic residues predominate over residues 89–129; sequence LIKERRSLKPEVRKANREEKLKANKEKKRAEKAARKAEKAK.

This sequence belongs to the eukaryotic ribosomal protein eL24 family. In terms of assembly, component of the large ribosomal subunit (LSU). Mature yeast ribosomes consist of a small (40S) and a large (60S) subunit. The 40S small subunit contains 1 molecule of ribosomal RNA (18S rRNA) and 33 different proteins (encoded by 57 genes). The large 60S subunit contains 3 rRNA molecules (25S, 5.8S and 5S rRNA) and 46 different proteins (encoded by 81 genes).

Its subcellular location is the cytoplasm. Its function is as follows. Component of the ribosome, a large ribonucleoprotein complex responsible for the synthesis of proteins in the cell. The small ribosomal subunit (SSU) binds messenger RNAs (mRNAs) and translates the encoded message by selecting cognate aminoacyl-transfer RNA (tRNA) molecules. The large subunit (LSU) contains the ribosomal catalytic site termed the peptidyl transferase center (PTC), which catalyzes the formation of peptide bonds, thereby polymerizing the amino acids delivered by tRNAs into a polypeptide chain. The nascent polypeptides leave the ribosome through a tunnel in the LSU and interact with protein factors that function in enzymatic processing, targeting, and the membrane insertion of nascent chains at the exit of the ribosomal tunnel. The protein is Large ribosomal subunit protein eL24B of Saccharomyces cerevisiae (strain ATCC 204508 / S288c) (Baker's yeast).